Here is a 331-residue protein sequence, read N- to C-terminus: Flagellar P-ring protein (331 aa).

The signal sequence occupies residues 1–25 (MKKRLAVLLVIVLTITFSFSVTTRI).

This sequence belongs to the FlgI family. The basal body constitutes a major portion of the flagellar organelle and consists of four rings (L,P,S, and M) mounted on a central rod.

It localises to the periplasm. Its subcellular location is the bacterial flagellum basal body. Functionally, assembles around the rod to form the L-ring and probably protects the motor/basal body from shearing forces during rotation. This chain is Flagellar P-ring protein, found in Thermotoga petrophila (strain ATCC BAA-488 / DSM 13995 / JCM 10881 / RKU-1).